A 513-amino-acid polypeptide reads, in one-letter code: Keratin, type II cuticular Hb2 (513 aa).

Positions 1–120 (MSYHSFQPGS…PTVQRVKRDE (120 aa)) are head. One can recognise an IF rod domain in the interval 120–431 (EKEQIKCLNN…RLLEGEEHRL (312 aa)). The tract at residues 121–155 (KEQIKCLNNRFASFINKVRFLEQKNKLLETKWNFM) is coil 1A. The interval 156-165 (QQQRCCQTNI) is linker 1. The coil 1B stretch occupies residues 166–266 (EPIFEGYISA…YEEEICLLQS (101 aa)). Positions 267 to 283 (QISETSVIVKMDNSREL) are linker 12. Positions 284–427 (DVDGIIAEIK…ATYRRLLEGE (144 aa)) are coil 2. The segment at 428-513 (EHRLCEGIGP…AGGSSPSHKH (86 aa)) is tail.

It belongs to the intermediate filament family. In terms of assembly, heterotetramer of two type I and two type II keratins.

The chain is Keratin, type II cuticular Hb2 (KRT82) from Homo sapiens (Human).